The following is a 1377-amino-acid chain: Neogenin (1377 aa).

Residues 1-2 form the signal peptide; the sequence is AA. Over 3–1074 the chain is Extracellular; it reads AKNGSPPQSA…PTSPLDSNML (1072 aa). 4 consecutive Ig-like C2-type domains span residues 21-114, 121-206, 198-305, and 310-395; these read PLYF…RTAK, PRFT…EAEL, PKFS…AELT, and PEFL…AQLI. An N-linked (GlcNAc...) asparagine glycan is attached at N42. 3 cysteine pairs are disulfide-bonded: C43–C98, C142–C190, and C239–C289. N-linked (GlcNAc...) asparagine glycosylation is present at N179. An N-linked (GlcNAc...) asparagine glycan is attached at N295. A disulfide bridge links C331 with C379. Fibronectin type-III domains are found at residues 410–504, 510–600, 605–700, 710–800, 825–924, and 926–1023; these read APRD…TQPE, PAPN…TLSD, APQN…TFES, VPSS…RPHT, PPVG…LVPT, and PPKD…TPKA. Residues N439 and N458 are each glycosylated (N-linked (GlcNAc...) asparagine). 2 N-linked (GlcNAc...) asparagine glycosylation sites follow: N608 and N684. N878 carries an N-linked (GlcNAc...) asparagine glycan. The interval 1010-1066 is disordered; sequence GPMSEAVQFRTPKADSSDKMPNDQALGSAGKGGRLPDLGSDYKPPMSGSNSPHGSPT. Residues 1021–1030 are compositionally biased toward basic and acidic residues; it reads PKADSSDKMP. Positions 1056-1066 are enriched in polar residues; the sequence is SGSNSPHGSPT. The chain crosses the membrane as a helical span at residues 1075 to 1095; sequence LVIIVSIGVITIVVVVIIAVF. Topologically, residues 1096 to 1377 are cytoplasmic; that stretch reads CTRRTTSHQK…MKDLNAITTA (282 aa). Residues 1143 to 1281 are disordered; that stretch reads PIDKSPDPNP…SHPLKSFAVP (139 aa). 2 positions are modified to phosphoserine: S1147 and S1163. Composition is skewed to polar residues over residues 1160-1176, 1213-1238, and 1246-1265; these read PRNSQDITPVDNSMDSN, QPPQQSVRNTPSTDTMPASSSQTCCT, and ATSSSYLASSQEEDSGQSLP. T1167 carries the phosphothreonine modification. S1317 carries the phosphoserine modification. At T1320 the chain carries Phosphothreonine. 3 positions are modified to phosphoserine: S1348, S1350, and S1351.

The protein belongs to the immunoglobulin superfamily. DCC family. Interacts with MYO10. Interacts with RGMA and RGMB. Interacts with BMP2, BMP4, BMP6, and BMP7.

It is found in the cell membrane. In terms of biological role, multi-functional cell surface receptor regulating cell adhesion in many diverse developmental processes, including neural tube and mammary gland formation, myogenesis and angiogenesis. Receptor for members of the BMP, netrin, and repulsive guidance molecule (RGM) families. Netrin-Neogenin interactions result in a chemoattractive axon guidance response and cell-cell adhesion, the interaction between NEO1/Neogenin and RGMa and RGMb induces a chemorepulsive response. In Rattus norvegicus (Rat), this protein is Neogenin (Neo1).